The primary structure comprises 324 residues: Ribosomal RNA small subunit methyltransferase H (324 aa).

S-adenosyl-L-methionine-binding positions include 35-37, aspartate 55, phenylalanine 85, aspartate 103, and glutamine 110; that span reads GGH.

Belongs to the methyltransferase superfamily. RsmH family.

It is found in the cytoplasm. The enzyme catalyses cytidine(1402) in 16S rRNA + S-adenosyl-L-methionine = N(4)-methylcytidine(1402) in 16S rRNA + S-adenosyl-L-homocysteine + H(+). Specifically methylates the N4 position of cytidine in position 1402 (C1402) of 16S rRNA. The polypeptide is Ribosomal RNA small subunit methyltransferase H (Solidesulfovibrio magneticus (strain ATCC 700980 / DSM 13731 / RS-1) (Desulfovibrio magneticus)).